A 213-amino-acid chain; its full sequence is Motile sperm domain-containing protein 1 (213 aa).

The 128-residue stretch at 16-143 (PVFVFPTELI…KEHLTESLFF (128 aa)) folds into the MSP domain. Helical transmembrane passes span 159-179 (SLLT…PTLG) and 191-211 (LSVN…MAIL). Residues 205-208 (LITM) carry the Nuclear export signal motif.

It is found in the endoplasmic reticulum membrane. Its subcellular location is the golgi apparatus membrane. Its function is as follows. Plays a role in differentiation and/or proliferation of mesenchymal stem cells. Proposed to be involved in epithelial-to-mesenchymal transition (EMT). However, another study suggests that it is not required for EMT or stem cell self-renewal and acts during later stages of differentiation. The sequence is that of Motile sperm domain-containing protein 1 (MOSPD1) from Homo sapiens (Human).